Consider the following 235-residue polypeptide: Peptidyl-tRNA hydrolase (235 aa).

Tyr-14 serves as a coordination point for tRNA. Residue His-19 is the Proton acceptor of the active site. TRNA-binding residues include Phe-64, Asn-66, and Asn-112. The disordered stretch occupies residues 188–235; that stretch reads APARNSGTRPDNPGKGSPEKPAAKPANDPIAEPPSLSDRLRALTERFR. Basic and acidic residues predominate over residues 225-235; sequence DRLRALTERFR.

The protein belongs to the PTH family. In terms of assembly, monomer.

The protein localises to the cytoplasm. It catalyses the reaction an N-acyl-L-alpha-aminoacyl-tRNA + H2O = an N-acyl-L-amino acid + a tRNA + H(+). Hydrolyzes ribosome-free peptidyl-tRNAs (with 1 or more amino acids incorporated), which drop off the ribosome during protein synthesis, or as a result of ribosome stalling. Functionally, catalyzes the release of premature peptidyl moieties from peptidyl-tRNA molecules trapped in stalled 50S ribosomal subunits, and thus maintains levels of free tRNAs and 50S ribosomes. This chain is Peptidyl-tRNA hydrolase, found in Paracoccus denitrificans (strain Pd 1222).